Reading from the N-terminus, the 530-residue chain is Synembryn-like chaperone C3E7.04c (530 aa).

The chain crosses the membrane as a helical span at residues 492-512; that stretch reads SFIYHCYHSFVGPIHILLLMF.

The protein belongs to the synembryn family.

It localises to the membrane. Functionally, chaperone that specifically binds and folds some, but not all, nascent G alpha proteins prior to G protein heterotrimer formation, promoting their stability and activity. Also acts as a guanine nucleotide exchange factor (GEF) for G alpha proteins by stimulating exchange of bound GDP for free GTP. The polypeptide is Synembryn-like chaperone C3E7.04c (Schizosaccharomyces pombe (strain 972 / ATCC 24843) (Fission yeast)).